Reading from the N-terminus, the 1070-residue chain is Envelopment polyprotein (1070 aa).

A signal peptide spans 1–17 (MMFSRVMQLALICAVTC). The Lumenal portion of the chain corresponds to 18–457 (EDNPCLWERF…SNPQCYPYGK (440 aa)). 8 disulfide bridges follow: Cys22–Cys55, Cys152–Cys165, Cys211–Cys221, Cys267–Cys309, Cys296–Cys301, Cys353–Cys356, Cys360–Cys429, and Cys380–Cys385. Residue Asn269 is glycosylated (N-linked (GlcNAc...) asparagine; by host). Residues 458–478 (WFLLFLILATLYIIVALLKTI) form a helical membrane-spanning segment. Topologically, residues 479–536 (MRIFMACLSVLYGPFIIIIKISRCLGRLGKRKGERTYVRLMEALDDERKPEVVRAPVS) are cytoplasmic. A golgi retention signal region spans residues 480 to 522 (RIFMACLSVLYGPFIIIIKISRCLGRLGKRKGERTYVRLMEAL). The tract at residues 541 to 560 (KQPRIVLFIVLALLVHMALC) is internal signal sequence for glycoprotein C. Residues 550–560 (VLALLVHMALC) constitute a propeptide that is removed on maturation. Residues 550–1023 (VLALLVHMAL…NWLDTLFGAS (474 aa)) lie on the Lumenal side of the membrane. 10 disulfides stabilise this stretch: Cys561-Cys602, Cys574-Cys584, Cys642-Cys831, Cys648-Cys696, Cys654-Cys703, Cys659-Cys685, Cys689-Cys694, Cys799-Cys813, Cys896-Cys966, and Cys906-Cys909. The fusion loop stretch occupies residues 648–654 (CRWAGSC). The tract at residues 690 to 701 (GGAACGCFNAAP) is fusion loop. A helical membrane pass occupies residues 1024–1044 (LLGKILGIGLAILSPFILILI). The Cytoplasmic portion of the chain corresponds to 1045 to 1070 (LRWILRVVLRRSRIRREPKYEMAKYS).

It belongs to the phlebovirus envelope glycoprotein family. As to quaternary structure, heterodimer with glycoprotein C. Heterodimer with glycoprotein N. Homotrimer (postfusion). Specific enzymatic cleavages in vivo yield mature proteins Glycoprotein C, and Glycoprotein N. In terms of processing, glycosylated. Post-translationally, palmitoylated.

Its subcellular location is the virion membrane. The protein localises to the host Golgi apparatus membrane. The protein resides in the host endoplasmic reticulum membrane. In terms of biological role, structural component of the virion that interacts with glycoprotein C. It shields the hydrophobic fusion loops of the glycoprotein C, preventing premature fusion. The glycoprotein protrusions are arranged on an icosahedral lattice, with T=12 triangulation. They are able to attach the virion to the host cell receptor CD209/DC-SIGN and to promote fusion of membranes with the late endosome after endocytosis of the virion. Plays a role in the packaging of ribonucleoproteins during virus assembly. Functionally, structural component of the virion that interacts with glycoprotein N. Acts as a class II fusion protein that is activated upon acidification and subsequent repositioning of the glycoprotein N. The glycoprotein protrusions are arranged on an icosahedral lattice, with T=12 triangulation. They are able to attach the virion to the host cell receptor CD209/DC-SIGN and to promote fusion of membranes with the late endosome after endocytosis of the virion. The polypeptide is Envelopment polyprotein (GP) (Amblyomma variegatum (Tropical bont tick)).